The primary structure comprises 625 residues: Probable potassium transport system protein Kup 1 (625 aa).

The next 12 membrane-spanning stretches (helical) occupy residues 14–34, 50–70, 104–124, 139–159, 170–190, 213–233, 249–269, 287–307, 339–359, 368–388, 396–416, and 421–441; these read LSLLALSALGIVFGDIGTSPL, AAAVLGALSLVIWTLFIITTV, IVALGLFGAALIYGDGAITPA, PALQPYVVPAAVVILLALFAI, LFGPVMLLWFVTIAVLGLVGI, GATGFLVLGSVFLCVTGAEAL, WFAVVFPSLIINYAGQAALVI, LLLPLIGLATLATIIASQSVI, IYVGAVNWLLMLVTVSLTIGF, AYGIAVSLTMLMTSALLFIAM, LLAAGAVAGVFLTIDSAFFLA, and IAEGGYVPLLLATSVYGLMWI.

The protein belongs to the HAK/KUP transporter (TC 2.A.72) family.

Its subcellular location is the cell inner membrane. It catalyses the reaction K(+)(in) + H(+)(in) = K(+)(out) + H(+)(out). In terms of biological role, transport of potassium into the cell. Likely operates as a K(+):H(+) symporter. The sequence is that of Probable potassium transport system protein Kup 1 from Bradyrhizobium sp. (strain ORS 278).